A 521-amino-acid chain; its full sequence is Apolipoprotein N-acyltransferase (521 aa).

6 helical membrane passes run 27-47 (VLLA…IAFA), 64-84 (LGFV…TIVV), 93-113 (IVSV…PAVV), 125-145 (ISLL…RAFL), 167-187 (IADI…NVVL), and 202-222 (YPVK…AYGF). The 245-residue stretch at 239-483 (IQGNIDQNIK…EAVLNGEVRL (245 aa)) folds into the CN hydrolase domain. Glu281 functions as the Proton acceptor in the catalytic mechanism. Lys344 is a catalytic residue. The Nucleophile role is filled by Cys394. A helical membrane pass occupies residues 493 to 513 (YGDVFAWACVAGAAVVAALAF).

It belongs to the CN hydrolase family. Apolipoprotein N-acyltransferase subfamily.

The protein localises to the cell inner membrane. The enzyme catalyses N-terminal S-1,2-diacyl-sn-glyceryl-L-cysteinyl-[lipoprotein] + a glycerophospholipid = N-acyl-S-1,2-diacyl-sn-glyceryl-L-cysteinyl-[lipoprotein] + a 2-acyl-sn-glycero-3-phospholipid + H(+). It functions in the pathway protein modification; lipoprotein biosynthesis (N-acyl transfer). Functionally, catalyzes the phospholipid dependent N-acylation of the N-terminal cysteine of apolipoprotein, the last step in lipoprotein maturation. The polypeptide is Apolipoprotein N-acyltransferase (Geobacter metallireducens (strain ATCC 53774 / DSM 7210 / GS-15)).